A 285-amino-acid chain; its full sequence is Sulfotransferase 2A2 (285 aa).

The 3'-phosphoadenylyl sulfate site is built by lysine 44, serine 45, glycine 46, threonine 47, asparagine 48, and tryptophan 49. The Proton acceptor role is filled by histidine 99. Residues arginine 121, serine 129, tyrosine 184, serine 218, methionine 223, arginine 247, lysine 248, and glycine 249 each coordinate 3'-phosphoadenylyl sulfate.

The protein belongs to the sulfotransferase 1 family.

It localises to the cytoplasm. The enzyme catalyses an alcohol + 3'-phosphoadenylyl sulfate = an alkyl sulfate + adenosine 3',5'-bisphosphate + H(+). Sulfotransferase that utilizes 3'-phospho-5'-adenylyl sulfate (PAPS) as sulfonate donor to catalyze the sulfate conjugation of a potential wide variety of acceptor molecules bearing a hydroxyl group. Sulfonation increases the water solubility of most compounds, and therefore their renal excretion, but it can also result in bioactivation to form active metabolites. The polypeptide is Sulfotransferase 2A2 (Mus musculus (Mouse)).